A 115-amino-acid chain; its full sequence is Large ribosomal subunit protein bL19 (115 aa).

The protein belongs to the bacterial ribosomal protein bL19 family.

Its function is as follows. This protein is located at the 30S-50S ribosomal subunit interface and may play a role in the structure and function of the aminoacyl-tRNA binding site. In Bacillus licheniformis (strain ATCC 14580 / DSM 13 / JCM 2505 / CCUG 7422 / NBRC 12200 / NCIMB 9375 / NCTC 10341 / NRRL NRS-1264 / Gibson 46), this protein is Large ribosomal subunit protein bL19.